The sequence spans 195 residues: Imidazoleglycerol-phosphate dehydratase (195 aa).

Belongs to the imidazoleglycerol-phosphate dehydratase family.

The protein resides in the cytoplasm. The enzyme catalyses D-erythro-1-(imidazol-4-yl)glycerol 3-phosphate = 3-(imidazol-4-yl)-2-oxopropyl phosphate + H2O. It participates in amino-acid biosynthesis; L-histidine biosynthesis; L-histidine from 5-phospho-alpha-D-ribose 1-diphosphate: step 6/9. The protein is Imidazoleglycerol-phosphate dehydratase of Cupriavidus pinatubonensis (strain JMP 134 / LMG 1197) (Cupriavidus necator (strain JMP 134)).